Reading from the N-terminus, the 194-residue chain is Auxin-induced protein 22A (194 aa).

An EAR-like (transcriptional repression) motif is present at residues 13–17; it reads LRLGL. A disordered region spans residues 40–62; the sequence is EIDDVGDENSSSGGGGDRKMENK. Residues 85 to 173 form the PB1 domain; sequence KMYVKVSMDG…KRLRIMKRAD (89 aa).

The protein belongs to the Aux/IAA family. As to quaternary structure, homodimers and heterodimers.

The protein localises to the nucleus. Aux/IAA proteins are short-lived transcriptional factors that function as repressors of early auxin response genes at low auxin concentrations. Repression is thought to result from the interaction with auxin response factors (ARFs), proteins that bind to the auxin-responsive promoter element (AuxRE). Formation of heterodimers with ARF proteins may alter their ability to modulate early auxin response genes expression. In Vigna radiata var. radiata (Mung bean), this protein is Auxin-induced protein 22A (AUX22A).